Here is a 472-residue protein sequence, read N- to C-terminus: Adenosylhomocysteinase (472 aa).

Thr63, Asp138, and Glu198 together coordinate substrate. An NAD(+)-binding site is contributed by 199–201 (TTT). Residues Lys228 and Asp232 each contribute to the substrate site. NAD(+)-binding positions include Asn233, 262–267 (GYGDVG), Glu285, Asn320, 341–343 (IGH), and Asn386.

It belongs to the adenosylhomocysteinase family. NAD(+) serves as cofactor.

The protein localises to the cytoplasm. The catalysed reaction is S-adenosyl-L-homocysteine + H2O = L-homocysteine + adenosine. Its pathway is amino-acid biosynthesis; L-homocysteine biosynthesis; L-homocysteine from S-adenosyl-L-homocysteine: step 1/1. In terms of biological role, may play a key role in the regulation of the intracellular concentration of adenosylhomocysteine. The sequence is that of Adenosylhomocysteinase from Methylococcus capsulatus (strain ATCC 33009 / NCIMB 11132 / Bath).